The following is a 449-amino-acid chain: Tubulin beta chain (449 aa).

8 residues coordinate GTP: Gln11, Glu69, Ser138, Gly142, Thr143, Gly144, Asn204, and Asn226. Glu69 contacts Mg(2+).

The protein belongs to the tubulin family. In terms of assembly, dimer of alpha and beta chains. A typical microtubule is a hollow water-filled tube with an outer diameter of 25 nm and an inner diameter of 15 nM. Alpha-beta heterodimers associate head-to-tail to form protofilaments running lengthwise along the microtubule wall with the beta-tubulin subunit facing the microtubule plus end conferring a structural polarity. Microtubules usually have 13 protofilaments but different protofilament numbers can be found in some organisms and specialized cells. Mg(2+) is required as a cofactor.

It is found in the cytoplasm. The protein localises to the cytoskeleton. Functionally, tubulin is the major constituent of microtubules, a cylinder consisting of laterally associated linear protofilaments composed of alpha- and beta-tubulin heterodimers. Microtubules grow by the addition of GTP-tubulin dimers to the microtubule end, where a stabilizing cap forms. Below the cap, tubulin dimers are in GDP-bound state, owing to GTPase activity of alpha-tubulin. This Candida albicans (Yeast) protein is Tubulin beta chain (TUB2).